A 473-amino-acid chain; its full sequence is UDP-N-acetylmuramate--L-alanine ligase (473 aa).

Residue 119–125 (GTHGKTT) coordinates ATP.

Belongs to the MurCDEF family.

It localises to the cytoplasm. The enzyme catalyses UDP-N-acetyl-alpha-D-muramate + L-alanine + ATP = UDP-N-acetyl-alpha-D-muramoyl-L-alanine + ADP + phosphate + H(+). It participates in cell wall biogenesis; peptidoglycan biosynthesis. Cell wall formation. In Caulobacter vibrioides (strain NA1000 / CB15N) (Caulobacter crescentus), this protein is UDP-N-acetylmuramate--L-alanine ligase.